Consider the following 274-residue polypeptide: Bis(5'-nucleosyl)-tetraphosphatase, symmetrical (274 aa).

This sequence belongs to the Ap4A hydrolase family.

It carries out the reaction P(1),P(4)-bis(5'-adenosyl) tetraphosphate + H2O = 2 ADP + 2 H(+). Hydrolyzes diadenosine 5',5'''-P1,P4-tetraphosphate to yield ADP. The protein is Bis(5'-nucleosyl)-tetraphosphatase, symmetrical of Shewanella loihica (strain ATCC BAA-1088 / PV-4).